A 399-amino-acid chain; its full sequence is tRNA-specific 2-thiouridylase MnmA (399 aa).

ATP contacts are provided by residues alanine 18–serine 25 and leucine 44. Catalysis depends on cysteine 112, which acts as the Nucleophile. A disulfide bond links cysteine 112 and cysteine 213. Position 136 (glycine 136) interacts with ATP. Positions arginine 163 to glutamine 165 are interaction with tRNA. The active-site Cysteine persulfide intermediate is the cysteine 213.

It belongs to the MnmA/TRMU family.

The protein localises to the cytoplasm. The catalysed reaction is S-sulfanyl-L-cysteinyl-[protein] + uridine(34) in tRNA + AH2 + ATP = 2-thiouridine(34) in tRNA + L-cysteinyl-[protein] + A + AMP + diphosphate + H(+). Catalyzes the 2-thiolation of uridine at the wobble position (U34) of tRNA, leading to the formation of s(2)U34. This Rhizobium rhizogenes (strain K84 / ATCC BAA-868) (Agrobacterium radiobacter) protein is tRNA-specific 2-thiouridylase MnmA.